The following is a 376-amino-acid chain: Alcohol dehydrogenase class-3 (376 aa).

At Ala-1 the chain carries N-acetylalanine. Zn(2+) contacts are provided by Cys-47, His-69, Cys-99, Cys-102, Cys-105, Cys-113, and Cys-176.

Belongs to the zinc-containing alcohol dehydrogenase family. Class-III subfamily. In terms of assembly, homodimer. Requires Zn(2+) as cofactor.

It localises to the cytoplasm. It catalyses the reaction a primary alcohol + NAD(+) = an aldehyde + NADH + H(+). The enzyme catalyses a secondary alcohol + NAD(+) = a ketone + NADH + H(+). The catalysed reaction is S-(hydroxymethyl)glutathione + NADP(+) = S-formylglutathione + NADPH + H(+). It carries out the reaction S-(hydroxymethyl)glutathione + NAD(+) = S-formylglutathione + NADH + H(+). It catalyses the reaction S-nitrosoglutathione + NADH + H(+) = S-(hydroxysulfenamide)glutathione + NAD(+). Functionally, class-III ADH is remarkably ineffective in oxidizing ethanol, but it readily catalyzes the oxidation of long-chain primary alcohols and the oxidation of S-(hydroxymethyl) glutathione. Also acts as a S-nitroso-glutathione reductase by catalyzing the NADH-dependent reduction of S-nitrosoglutathione, thereby regulating protein S-nitrosylation. The sequence is that of Alcohol dehydrogenase class-3 from Scyliorhinus canicula (Small-spotted catshark).